The following is a 307-amino-acid chain: GTPase Era (307 aa).

One can recognise an Era-type G domain in the interval 14 to 184 (HSGFVAIVGK…REQILDILPE (171 aa)). A G1 region spans residues 22–29 (GKPNVGKS). GTP is bound at residue 22 to 29 (GKPNVGKS). The tract at residues 48–52 (QTTRR) is G2. The tract at residues 69 to 72 (DTPG) is G3. GTP-binding positions include 69 to 73 (DTPGL) and 131 to 134 (NKTD). Positions 131 to 134 (NKTD) are G4. The tract at residues 162–164 (LSA) is G5. In terms of domain architecture, KH type-2 spans 215–292 (LREELPYAVA…FLGLEVIVIP (78 aa)).

The protein belongs to the TRAFAC class TrmE-Era-EngA-EngB-Septin-like GTPase superfamily. Era GTPase family. As to quaternary structure, monomer.

The protein resides in the cytoplasm. The protein localises to the cell membrane. In terms of biological role, an essential GTPase that binds both GDP and GTP, with rapid nucleotide exchange. Plays a role in 16S rRNA processing and 30S ribosomal subunit biogenesis and possibly also in cell cycle regulation and energy metabolism. This chain is GTPase Era, found in Deinococcus deserti (strain DSM 17065 / CIP 109153 / LMG 22923 / VCD115).